Here is a 409-residue protein sequence, read N- to C-terminus: Probable sodium/metabolite cotransporter BASS6, chloroplastic (409 aa).

The N-terminal 49 residues, M1–I49, are a transit peptide targeting the chloroplast. 9 consecutive transmembrane segments (helical) span residues I100–T120, W121–N141, V170–G190, A191–L211, I221–L241, G253–N273, P285–L305, A316–L336, and I381–W401.

It belongs to the bile acid:sodium symporter (BASS) (TC 2.A.28) family.

The protein resides in the membrane. Its subcellular location is the plastid. It is found in the chloroplast envelope. In terms of biological role, may function as sodium-coupled metabolite transporter across the chloroplast envelope. In Arabidopsis thaliana (Mouse-ear cress), this protein is Probable sodium/metabolite cotransporter BASS6, chloroplastic (BASS6).